A 1007-amino-acid chain; its full sequence is MDGVKPVASAEQGGAVEARFTEFCKNGLQLDESTFAQAMKLFEESNHLLSTTSLSAIGNGVPEDSERYWFAFILYSVKRLSEGTAENVQQGNDENGFNLCQILRVSKLNIVDFFKELPQFIVKVGPILGNLYGPDWEKRLEAKELQANFVHLSILSKYYKRAYLEFFSTSGSNLDKQSSVISASGYVSDYHRFGWLLFLALRVHAFSRFKDLVTCTNGLVSILAILILHVPISFRSFTINNYPRFVKKGNKGMDLLASLCDIYETSEDEVRKTMEQTNKVIVDILKKKPCLASECKSENLASIDPDGLVYFEDLMDESSLSSSINILEKDYDAAIRNKGELDERVFINGEDSLLGSGSLSGGAMSISGAKRKIDSLASPAKTITSPLSPNRSPGILGGANSKMAPTPVTTAMTTAKWLRTVISPLPSKPSAELERFLTSCDKDVTSDVIRRANVILEAIFPSIAFGERCVTGSASLMDSIWAQQRRMEAMKLYYRVLEAMCTAEAQVLHANNLTSLLTNERFHRCMLACSAELVLATHKTVTMLFPAVLERTGITAFDLSKVIESFIRHEESLPRELRRHLNSLEERLLESMVWEKGSSMYNSLIVARAALSAEVNRLGLLAEPMPSLDAISMHINASCGGLPPVPSLQKRESSPGQNGDIRSPKRVCPDYRSVLVERNSFTSPVKDRFLALNNLKSKLPPPPLQSAFASPTRPNPGREGETCAETGINIFFSKIIKLAAVRINGMVERLQLSQQMRENVYCLFQQILNRRTSLFFNRHIDQIILCCFYGLAKISQMNLTFREIIHNYRKQPQCKPQIFRSVFVDWSSARRNGKTGKEHVDIITFYNEIFIPAVKPLLMEIGPGGGTTTKTNRVPEVNNNNDAQCPESPKISPFPSLPDMSPKKVSAAHNVYVSPLRSSKMDALISHSSKSYYACVGESTHAYQSPSKDLTAINNRLNSTRKLRGALNFDDVEGLVSDSLVAKSLYLQNGSCASSSGAPLKLEQPDT.

The domain A stretch occupies residues 406 to 604 (TPVTTAMTTA…EKGSSMYNSL (199 aa)). Residues 406–856 (TPVTTAMTTA…NEIFIPAVKP (451 aa)) are pocket. The segment at 605–725 (IVARAALSAE…PGREGETCAE (121 aa)) is spacer. The interval 644-665 (PVPSLQKRESSPGQNGDIRSPK) is disordered. The interval 726 to 856 (TGINIFFSKI…NEIFIPAVKP (131 aa)) is domain B.

It belongs to the retinoblastoma protein (RB) family.

The protein localises to the nucleus. Its function is as follows. Regulator of biological processes that recruits a histone deacetylase to control gene transcription. May play a role in the entry into mitosis, negatively regulating the cell proliferation. Formation of stable complexes with geminiviridae replication-associated proteins may create a cellular environment which favors viral DNA replication. This Vitis vinifera (Grape) protein is Retinoblastoma-related protein (RBR).